The sequence spans 363 residues: DNA replication and repair protein RecF (363 aa).

Position 30–37 (30–37 (GPNGSGKT)) interacts with ATP.

This sequence belongs to the RecF family.

Its subcellular location is the cytoplasm. Its function is as follows. The RecF protein is involved in DNA metabolism; it is required for DNA replication and normal SOS inducibility. RecF binds preferentially to single-stranded, linear DNA. It also seems to bind ATP. The protein is DNA replication and repair protein RecF of Chlorobium phaeobacteroides (strain BS1).